The primary structure comprises 253 residues: Ubiquinone/menaquinone biosynthesis C-methyltransferase UbiE (253 aa).

Residues T76, D97, and 125–126 each bind S-adenosyl-L-methionine; that span reads NA.

It belongs to the class I-like SAM-binding methyltransferase superfamily. MenG/UbiE family.

The catalysed reaction is a 2-demethylmenaquinol + S-adenosyl-L-methionine = a menaquinol + S-adenosyl-L-homocysteine + H(+). The enzyme catalyses a 2-methoxy-6-(all-trans-polyprenyl)benzene-1,4-diol + S-adenosyl-L-methionine = a 5-methoxy-2-methyl-3-(all-trans-polyprenyl)benzene-1,4-diol + S-adenosyl-L-homocysteine + H(+). It participates in quinol/quinone metabolism; menaquinone biosynthesis; menaquinol from 1,4-dihydroxy-2-naphthoate: step 2/2. It functions in the pathway cofactor biosynthesis; ubiquinone biosynthesis. Methyltransferase required for the conversion of demethylmenaquinol (DMKH2) to menaquinol (MKH2) and the conversion of 2-polyprenyl-6-methoxy-1,4-benzoquinol (DDMQH2) to 2-polyprenyl-3-methyl-6-methoxy-1,4-benzoquinol (DMQH2). The polypeptide is Ubiquinone/menaquinone biosynthesis C-methyltransferase UbiE (Rhodopseudomonas palustris (strain HaA2)).